The following is a 263-amino-acid chain: L-erythrulose-1-phosphate isomerase (263 aa).

Catalysis depends on histidine 106, which acts as the Electrophile. Catalysis depends on glutamate 178, which acts as the Proton acceptor.

This sequence belongs to the triosephosphate isomerase family.

It catalyses the reaction L-erythrulose 1-phosphate = D-erythrulose 4-phosphate. It functions in the pathway carbohydrate metabolism; L-threitol degradation. Functionally, catalyzes the isomerization of L-erythrulose-1P to D-erythrulose-4P. Involved in the degradation pathway of L-threitol, that allows M.smegmatis to grow on this compound as the sole carbon source. The chain is L-erythrulose-1-phosphate isomerase from Mycolicibacterium smegmatis (strain ATCC 700084 / mc(2)155) (Mycobacterium smegmatis).